Consider the following 115-residue polypeptide: Kunitz-type trypsin inhibitor 1 (115 aa).

The protein belongs to the protease inhibitor I3 (leguminous Kunitz-type inhibitor) family.

Its function is as follows. Exhibits Kunitz trypsin protease inhibitor activity. The chain is Kunitz-type trypsin inhibitor 1 from Selenicereus undatus (Pitahaya).